A 339-amino-acid chain; its full sequence is Terpene synthase 7 (339 aa).

The short motif at 79–84 (DDFLES) is the DDxx(x)D/E motif element. An NDxxSxxxD/E motif motif is present at residues 219 to 227 (NDCASYAKE).

This sequence belongs to the terpene synthase family.

The catalysed reaction is (2E,6E)-farnesyl diphosphate = (-)-beta-barbatene + diphosphate. Functionally, terpene synthase that converts its substrate farnesyl diphosphate (FPP) into the sesquiterpene beta-barbatene. The polypeptide is Terpene synthase 7 (Dictyostelium discoideum (Social amoeba)).